Reading from the N-terminus, the 631-residue chain is Probable G-protein coupled receptor 153 (631 aa).

The Extracellular segment spans residues 1–11; sequence MSDERRLPSSA. Residues 12–32 traverse the membrane as a helical segment; that stretch reads VGWLACGGLSLLANAWGILSV. The Cytoplasmic portion of the chain corresponds to 33-41; it reads GAKQKKWKP. The helical transmembrane segment at 42 to 62 threads the bilayer; it reads LEFLLCTLAATHMLNVAVPIA. At 63–84 the chain is on the extracellular side; that stretch reads TYAVVQLRRQRPDYEWNEGLCK. The helical transmembrane segment at 85 to 105 threads the bilayer; it reads VFVSTFYTLTLATCFSVTSIS. The Cytoplasmic segment spans residues 106–126; sequence YHRMWMVRWPVNYRLSNAKKQ. A helical membrane pass occupies residues 127 to 147; that stretch reads AVHTVMGIWMVSFILSALPAV. At 148–162 the chain is on the extracellular side; the sequence is GWHDTSERFYTHGCR. Residues 163 to 183 traverse the membrane as a helical segment; sequence FIVAEIGLGFGVCFLLLVGGS. Topologically, residues 184–243 are cytoplasmic; the sequence is VAMGMVCTAIALFQTLATQVGHRADRRTFTVPTIVVEDAQGKRRSSIDGSEPARTSLQIT. Residues 244-264 traverse the membrane as a helical segment; the sequence is GLVATIVVIYDCLMGFPVLVV. The Extracellular segment spans residues 265–276; it reads SFSSLRADASAP. Residues 277–297 form a helical membrane-spanning segment; sequence WMALCVLWCSVTQALLLPLFL. The Cytoplasmic segment spans residues 298–631; sequence WTCDRYRADL…LHSDSLGSAS (334 aa). Disordered regions lie at residues 486–518, 546–590, and 603–631; these read LQPS…RSAS, QPFP…SLSA, and CGSI…GSAS. Low complexity predominate over residues 605–617; that stretch reads SISSFLSSPSESS.

Belongs to the G-protein coupled receptor 1 family.

Its subcellular location is the cell membrane. Functionally, orphan receptor. The sequence is that of Probable G-protein coupled receptor 153 (Gpr153) from Mus musculus (Mouse).